The following is a 310-amino-acid chain: Uridine phosphorylase 1 (310 aa).

Phosphate contacts are provided by residues Gly60, Arg94, and 138-141 (RIGT). Uridine is bound by residues 142–143 (SG) and 217–219 (QGR).

This sequence belongs to the PNP/UDP phosphorylase family. Homodimer.

The enzyme catalyses uridine + phosphate = alpha-D-ribose 1-phosphate + uracil. It catalyses the reaction 2'-deoxyuridine + phosphate = 2-deoxy-alpha-D-ribose 1-phosphate + uracil. Its pathway is pyrimidine metabolism; UMP biosynthesis via salvage pathway; uracil from uridine (phosphorylase route): step 1/1. Catalyzes the reversible phosphorylytic cleavage of uridine to uracil and ribose-1-phosphate which can then be utilized as carbon and energy sources or in the rescue of pyrimidine bases for nucleotide synthesis. Shows broad substrate specificity and can also accept deoxyuridine and other analogous compounds. This is Uridine phosphorylase 1 from Homo sapiens (Human).